The following is a 373-amino-acid chain: Anhydro-N-acetylmuramic acid kinase (373 aa).

An ATP-binding site is contributed by 13–20 (GTSMDGID).

Belongs to the anhydro-N-acetylmuramic acid kinase family.

The enzyme catalyses 1,6-anhydro-N-acetyl-beta-muramate + ATP + H2O = N-acetyl-D-muramate 6-phosphate + ADP + H(+). It functions in the pathway amino-sugar metabolism; 1,6-anhydro-N-acetylmuramate degradation. It participates in cell wall biogenesis; peptidoglycan recycling. Its function is as follows. Catalyzes the specific phosphorylation of 1,6-anhydro-N-acetylmuramic acid (anhMurNAc) with the simultaneous cleavage of the 1,6-anhydro ring, generating MurNAc-6-P. Is required for the utilization of anhMurNAc either imported from the medium or derived from its own cell wall murein, and thus plays a role in cell wall recycling. In Agrobacterium fabrum (strain C58 / ATCC 33970) (Agrobacterium tumefaciens (strain C58)), this protein is Anhydro-N-acetylmuramic acid kinase.